Consider the following 453-residue polypeptide: Malate dehydrogenase [NADP], chloroplastic (453 aa).

The N-terminal 68 residues, 1 to 68, are a transit peptide targeting the chloroplast; it reads MAVVKLSPWA…RLSSPASIRC (68 aa). The cysteines at positions 88 and 93 are disulfide-linked. 117-123 provides a ligand contact to NADP(+); sequence GAAGMIS. 2 residues coordinate substrate: Arg198 and Arg204. NADP(+) is bound by residues Asn211, Gln218, and 235–237; that span reads VGN. 2 residues coordinate substrate: Asn237 and Arg268. His293 acts as the Proton acceptor in catalysis. A disulfide bond links Cys429 and Cys441.

It belongs to the LDH/MDH superfamily. MDH type 2 family. Homodimer.

The protein localises to the plastid. The protein resides in the chloroplast. The catalysed reaction is (S)-malate + NADP(+) = oxaloacetate + NADPH + H(+). With respect to regulation, chloroplast NADP-MDH is activated upon illumination. In order to be enzymatically active, disulfide bridges on the protein must be reduced by thioredoxin which receives electrons from ferredoxin and the electron transport system of photosynthesis. Functionally, the chloroplastic, NADP-dependent form is essential for the photosynthesis C4 cycle, which allows plants to circumvent the problem of photorespiration. In C4 plants, NADP-MDH activity acts to convert oxaloacetate to malate in chloroplasts of mesophyll cells for transport to the bundle sheath cells. The sequence is that of Malate dehydrogenase [NADP], chloroplastic from Flaveria bidentis (Coastal plain yellowtops).